Here is a 383-residue protein sequence, read N- to C-terminus: Putative dehydratase subunit YjiM (383 aa).

Belongs to the FldB/FldC dehydratase alpha/beta subunit family.

This is Putative dehydratase subunit YjiM (yjiM) from Escherichia coli (strain K12).